Reading from the N-terminus, the 98-residue chain is NADH-ubiquinone oxidoreductase chain 4L (98 aa).

Helical transmembrane passes span 1-21 (MSLV…GLLM), 29-49 (SLLC…IMVL), and 61-81 (IILL…LVMV).

The protein belongs to the complex I subunit 4L family. In terms of assembly, core subunit of respiratory chain NADH dehydrogenase (Complex I) which is composed of 45 different subunits.

The protein localises to the mitochondrion inner membrane. The catalysed reaction is a ubiquinone + NADH + 5 H(+)(in) = a ubiquinol + NAD(+) + 4 H(+)(out). In terms of biological role, core subunit of the mitochondrial membrane respiratory chain NADH dehydrogenase (Complex I) which catalyzes electron transfer from NADH through the respiratory chain, using ubiquinone as an electron acceptor. Part of the enzyme membrane arm which is embedded in the lipid bilayer and involved in proton translocation. The sequence is that of NADH-ubiquinone oxidoreductase chain 4L (MT-ND4L) from Pseudosoriculus fumidus (Taiwanese brown-toothed shrew).